A 1020-amino-acid polypeptide reads, in one-letter code: C protein alpha-antigen (1020 aa).

Positions methionine 1–valine 41 are cleaved as a signal peptide. Positions valine 227–proline 964 are 9 X 82 AA tandem repeats. Disordered regions lie at residues aspartate 261 to aspartate 281, proline 306 to valine 330, proline 342 to aspartate 363, proline 388 to aspartate 445, proline 470 to valine 494, proline 506 to aspartate 527, proline 552 to valine 576, proline 588 to histidine 610, proline 634 to valine 658, proline 670 to histidine 692, proline 716 to valine 740, proline 752 to histidine 774, proline 798 to valine 822, proline 834 to histidine 856, proline 880 to valine 904, and proline 962 to alanine 989. Basic and acidic residues predominate over residues aspartate 272–aspartate 281. Positions glycine 320–proline 329 are enriched in polar residues. Residues aspartate 354 to aspartate 363 are compositionally biased toward basic and acidic residues. The segment covering glycine 402–proline 411 has biased composition (polar residues). Residues aspartate 436–aspartate 445 show a composition bias toward basic and acidic residues. Polar residues predominate over residues glycine 484–proline 493. Over residues aspartate 518–aspartate 527 the composition is skewed to basic and acidic residues. Residues glycine 566 to proline 575 show a composition bias toward polar residues. Positions aspartate 600–histidine 610 are enriched in basic and acidic residues. Residues glycine 648–proline 657 show a composition bias toward polar residues. Residues aspartate 682–histidine 692 show a composition bias toward basic and acidic residues. Residues glycine 730–proline 739 show a composition bias toward polar residues. The segment covering aspartate 764–histidine 774 has biased composition (basic and acidic residues). A compositionally biased stretch (polar residues) spans glycine 812–proline 821. The segment covering aspartate 846 to histidine 856 has biased composition (basic and acidic residues). Over residues glycine 894–proline 903 the composition is skewed to polar residues. Residues leucine 987–glycine 991 carry the LPXTG sorting signal motif. Pentaglycyl murein peptidoglycan amidated threonine is present on threonine 990. Residues glycine 991–aspartate 1020 constitute a propeptide, removed by sortase.

It is found in the secreted. Its subcellular location is the cell wall. May play a role in both virulence and immunity. The polypeptide is C protein alpha-antigen (bca) (Streptococcus agalactiae serotype Ia (strain ATCC 27591 / A909 / CDC SS700)).